The following is a 381-amino-acid chain: Early boundary activity protein 2 (381 aa).

A disordered region spans residues 210 to 245; it reads NDAEDVPAPPSKRPRHMSTSSSESHIPDTASEKDEK. The BEN domain occupies 268–365; the sequence is PNGTQITAHQ…TKCADTAKKY (98 aa).

The heterotrimeric Elba complex consists of Elba1, Elba2 and Elba3.

It is found in the nucleus. Functionally, the heterotrimeric Elba complex is required for chromatin domain boundary function during early embryogenesis. It binds to a 8-bp sequence 5'-CCAATAAG-3' in the Fab-7 insulator or boundary element in the bithorax complex and contributes to its insulator or boundary activity. Elba2 can act as a transcriptional repressor and binds the palindromic sequence 5'-CCAATTGG-3' to mediate transcriptional repression. The sequence is that of Early boundary activity protein 2 from Drosophila melanogaster (Fruit fly).